The chain runs to 808 residues: Probable E3 ubiquitin-protein ligase hulA (808 aa).

The region spanning 1–112 (MGSNLPAQPN…QMGGDEMLTR (112 aa)) is the C2 domain. Disordered stretches follow at residues 134 to 231 (NLST…GWER) and 275 to 346 (RRAH…YFVD). 2 stretches are compositionally biased toward polar residues: residues 142–159 (QANG…SSGL) and 171–198 (GPSQ…PSST). A compositionally biased stretch (low complexity) spans 199–210 (VAPVNGAAAPGA). Residues 211-220 (SRTNLSSFED) show a composition bias toward polar residues. The WW 1 domain occupies 223 to 256 (GRLPAGWERREDNLGRTYYVDHNTRTTTWTRPSS). The span at 275 to 288 (RRAHQSRMLPEDRT) shows a compositional bias: basic and acidic residues. Residues 289 to 303 (GASSPNLQENQQAQT) show a composition bias toward polar residues. The segment covering 317–326 (ATGATTAGTG) has biased composition (low complexity). WW domains follow at residues 326–359 (GELP…DPRR) and 386–419 (GPLP…DPRL). One can recognise an HECT domain in the interval 475-808 (SASDLKKRLM…VEETLGFGQE (334 aa)). Cysteine 776 functions as the Glycyl thioester intermediate in the catalytic mechanism.

The protein belongs to the RSP5/NEDD4 family. Interacts with creD.

The protein resides in the cytoplasm. It catalyses the reaction S-ubiquitinyl-[E2 ubiquitin-conjugating enzyme]-L-cysteine + [acceptor protein]-L-lysine = [E2 ubiquitin-conjugating enzyme]-L-cysteine + N(6)-ubiquitinyl-[acceptor protein]-L-lysine.. Its pathway is protein modification; protein ubiquitination. Its function is as follows. E3 ubiquitin-protein ligase which accepts ubiquitin from an E2 ubiquitin-conjugating enzyme in the form of a thioester and then directly transfers the ubiquitin to targeted substrates. Probably involved in the regulatory network controlling carbon source utilization. The protein is Probable E3 ubiquitin-protein ligase hulA (hulA) of Aspergillus terreus (strain NIH 2624 / FGSC A1156).